We begin with the raw amino-acid sequence, 1041 residues long: Collagen alpha-2(I) chain (1041 aa).

Residues 1 to 1041 (SGGFDFSFLP…FGYEGDFYRA (1041 aa)) form a disordered region. Residues Pro10, Pro13, Pro39, and Pro45 each carry the 4-hydroxyproline modification. Composition is skewed to low complexity over residues 25–45 (LGPG…SGAP) and 55–76 (EPGE…PPGK). Positions 77–91 (AGEDGHPGKPGRPGE) are enriched in basic and acidic residues. Position 113 is a 5-hydroxylysine; alternate (Lys113). O-linked (Gal...) hydroxylysine; alternate glycosylation is present at Lys113. Low complexity-rich tracts occupy residues 174 to 189 (SVGP…SAGP) and 235 to 256 (PGAN…AGAP). Gly residues predominate over residues 290–299 (GESGGKGEPG). The segment covering 300–310 (SAGPQGPPGSS) has biased composition (low complexity). Residues 332–341 (GLRGGPGSRG) are compositionally biased toward gly residues. Over residues 354 to 370 (PAGARGASGPAGVRGPS) the composition is skewed to low complexity. Residues Pro376 and Pro379 each carry the 4-hydroxyproline modification. A compositionally biased stretch (low complexity) spans 405 to 424 (LPGIDGRPGPIGPAGARGEA). Over residues 466-475 (GVQGGKGEQG) the composition is skewed to gly residues. Composition is skewed to low complexity over residues 522-539 (SGES…SRGP) and 551-561 (EPGVVGAPGTA). Over residues 562 to 571 (GPAGSGGLPG) the composition is skewed to gly residues. Low complexity-rich tracts occupy residues 594–638 (VGTT…PRGS) and 645–665 (VGPA…QPGA). Residues 666–675 (KGERGTKGPK) show a composition bias toward basic and acidic residues. The span at 683 to 693 (PTGPVGSAGPA) shows a compositional bias: low complexity. Gly residues predominate over residues 703–712 (GSRGDGGPPG). Over residues 714-723 (TGFPGAAGRT) the composition is skewed to low complexity. Residues 754-768 (GPVGRGETGAGGPPG) show a composition bias toward gly residues. Composition is skewed to low complexity over residues 769-803 (FTGE…LGLP) and 811-821 (LPGVAGAVGEP). Positions 822-840 (GPLGIGPPGARGPSGGVPG) are enriched in gly residues. Low complexity-rich tracts occupy residues 874-887 (YAGN…AGAP) and 903-918 (EPGP…ALGP). The segment covering 928 to 939 (RGDKGEAGDKGP) has biased composition (basic and acidic residues). Positions 1013–1023 (PAGPPGPPGPP) are enriched in pro residues.

Belongs to the fibrillar collagen family. As to quaternary structure, trimers of one alpha 2(I) and two alpha 1(I) chains. Interacts (via C-terminus) with TMEM131 (via PapD-L domain); the interaction is direct and is involved in assembly and TRAPPIII ER-to-Golgi transport complex-dependent secretion of collagen. Post-translationally, prolines at the third position of the tripeptide repeating unit (G-X-Y) are hydroxylated in some or all of the chains. As to expression, expressed in bones.

It is found in the secreted. It localises to the extracellular space. Its subcellular location is the extracellular matrix. Type I collagen is a member of group I collagen (fibrillar forming collagen). The chain is Collagen alpha-2(I) chain from Paramylodon harlani (Harlan's ground sloth).